Consider the following 226-residue polypeptide: Deoxyribose-phosphate aldolase (226 aa).

Asp-84 functions as the Proton donor/acceptor in the catalytic mechanism. The active-site Schiff-base intermediate with acetaldehyde is the Lys-146. Lys-188 functions as the Proton donor/acceptor in the catalytic mechanism.

The protein belongs to the DeoC/FbaB aldolase family. DeoC type 1 subfamily.

Its subcellular location is the cytoplasm. The catalysed reaction is 2-deoxy-D-ribose 5-phosphate = D-glyceraldehyde 3-phosphate + acetaldehyde. The protein operates within carbohydrate degradation; 2-deoxy-D-ribose 1-phosphate degradation; D-glyceraldehyde 3-phosphate and acetaldehyde from 2-deoxy-alpha-D-ribose 1-phosphate: step 2/2. Its function is as follows. Catalyzes a reversible aldol reaction between acetaldehyde and D-glyceraldehyde 3-phosphate to generate 2-deoxy-D-ribose 5-phosphate. This chain is Deoxyribose-phosphate aldolase, found in Pyrobaculum arsenaticum (strain DSM 13514 / JCM 11321 / PZ6).